A 222-amino-acid chain; its full sequence is uncharacterized protein (222 aa).

Gly-2 carries N-myristoyl glycine; by host lipidation.

Belongs to the mimivirus R683/R861 family.

This is an uncharacterized protein from Acanthamoeba polyphaga mimivirus (APMV).